A 513-amino-acid chain; its full sequence is Probable metalloreductase AIM14 (513 aa).

7 consecutive transmembrane segments (helical) span residues 22-42 (GYII…AHFL), 66-86 (PFWV…FTNV), 103-123 (LAFC…LLGQ), 138-158 (LIIL…TIHH), 166-186 (WANL…IVSS), 193-213 (FYSY…LLMI), and 219-239 (GVSD…ASRV). The region spanning 100 to 211 (LGRLAFCLVP…NFTVALFVLL (112 aa)) is the Ferric oxidoreductase domain. One can recognise an FAD-binding FR-type domain in the interval 240–368 (YNGYSVPGLT…GIPLYEYFDN (129 aa)).

The protein belongs to the ferric reductase (FRE) family. AIM14 subfamily.

The protein localises to the membrane. Functionally, probable cell surface metalloreductase. May be involved in iron or copper homeostasis. The protein is Probable metalloreductase AIM14 (AIM14) of Clavispora lusitaniae (strain ATCC 42720) (Yeast).